The following is a 236-amino-acid chain: 2-C-methyl-D-erythritol 4-phosphate cytidylyltransferase (236 aa).

This sequence belongs to the IspD/TarI cytidylyltransferase family. IspD subfamily. Homodimer.

The catalysed reaction is 2-C-methyl-D-erythritol 4-phosphate + CTP + H(+) = 4-CDP-2-C-methyl-D-erythritol + diphosphate. It functions in the pathway isoprenoid biosynthesis; isopentenyl diphosphate biosynthesis via DXP pathway; isopentenyl diphosphate from 1-deoxy-D-xylulose 5-phosphate: step 2/6. In terms of biological role, catalyzes the formation of 4-diphosphocytidyl-2-C-methyl-D-erythritol from CTP and 2-C-methyl-D-erythritol 4-phosphate (MEP). The polypeptide is 2-C-methyl-D-erythritol 4-phosphate cytidylyltransferase (Escherichia coli O7:K1 (strain IAI39 / ExPEC)).